The chain runs to 123 residues: MKELLIIGIGGFIGAILRYVISGIIPAKFGIPTGTFIVNLIGSFIVGFVMYSSTVIDISPEYRLLIITGFCGALTTFSTFSYETFSLIENNEHIKFLTNIFINVMGCLIMIYVGRIMSLTILR.

Transmembrane regions (helical) follow at residues leucine 5–isoleucine 25, phenylalanine 29–valine 49, leucine 65–phenylalanine 85, and isoleucine 94–glycine 114. Residues glycine 72 and threonine 75 each contribute to the Na(+) site.

The protein belongs to the fluoride channel Fluc/FEX (TC 1.A.43) family.

It localises to the cell membrane. It carries out the reaction fluoride(in) = fluoride(out). Na(+) is not transported, but it plays an essential structural role and its presence is essential for fluoride channel function. Functionally, fluoride-specific ion channel. Important for reducing fluoride concentration in the cell, thus reducing its toxicity. The sequence is that of Fluoride-specific ion channel FluC from Methanococcus aeolicus (strain ATCC BAA-1280 / DSM 17508 / OCM 812 / Nankai-3).